Consider the following 522-residue polypeptide: Lysophospholipid acyltransferase LPCAT4 (522 aa).

The next 2 helical transmembrane spans lie at 43 to 63 (ILGF…LFLM) and 92 to 112 (HLIY…WITI). The HXXXXD motif signature appears at 130–135 (HSTFFD). N-linked (GlcNAc...) asparagine glycosylation is found at asparagine 166 and asparagine 517. The interval 496 to 522 (GRRKPPHIQQNGGCSGKNNPRNQSKMD) is disordered. The segment covering 503-522 (IQQNGGCSGKNNPRNQSKMD) has biased composition (polar residues).

The protein belongs to the 1-acyl-sn-glycerol-3-phosphate acyltransferase family.

It localises to the endoplasmic reticulum membrane. The enzyme catalyses a 1-acyl-sn-glycero-3-phosphoethanolamine + an acyl-CoA = a 1,2-diacyl-sn-glycero-3-phosphoethanolamine + CoA. The catalysed reaction is a 1-O-(1Z-alkenyl)-sn-glycero-3-phosphoethanolamine + an acyl-CoA = a 1-O-(1Z-alkenyl)-2-acyl-sn-glycero-3-phosphoethanolamine + CoA. It catalyses the reaction a 1-acyl-sn-glycero-3-phosphocholine + an acyl-CoA = a 1,2-diacyl-sn-glycero-3-phosphocholine + CoA. It carries out the reaction a 1-O-alkyl-sn-glycero-3-phosphocholine + acetyl-CoA = a 1-O-alkyl-2-acetyl-sn-glycero-3-phosphocholine + CoA. The enzyme catalyses a 1-acyl-sn-glycero-3-phospho-L-serine + an acyl-CoA = a 1,2-diacyl-sn-glycero-3-phospho-L-serine + CoA. The protein operates within lipid metabolism; phospholipid metabolism. Functionally, displays acyl-CoA-dependent lysophospholipid acyltransferase activity with a subset of lysophospholipids as substrates. Prefers long chain acyl-CoAs (C16, C18) as acyl donors. This chain is Lysophospholipid acyltransferase LPCAT4 (lpcat4), found in Xenopus tropicalis (Western clawed frog).